We begin with the raw amino-acid sequence, 114 residues long: T cell receptor beta variable 5-8 (114 aa).

Positions 1–21 (MGPRLLFWALLCLLGTGPVEA) are cleaved as a signal peptide. The Ig-like domain occupies 22–114 (GVTQSPTHLI…SALYLCASSL (93 aa)). Residues cysteine 42 and cysteine 110 are joined by a disulfide bond. A glycan (N-linked (GlcNAc...) asparagine) is linked at asparagine 90.

In terms of assembly, alpha-beta TR is a heterodimer composed of an alpha and beta chain; disulfide-linked. The alpha-beta TR is associated with the transmembrane signaling CD3 coreceptor proteins to form the TR-CD3 (TcR or TCR). The assembly of alpha-beta TR heterodimers with CD3 occurs in the endoplasmic reticulum where a single alpha-beta TR heterodimer associates with one CD3D-CD3E heterodimer, one CD3G-CD3E heterodimer and one CD247 homodimer forming a stable octameric structure. CD3D-CD3E and CD3G-CD3E heterodimers preferentially associate with TR alpha and TR beta chains, respectively. The association of the CD247 homodimer is the last step of TcR assembly in the endoplasmic reticulum and is required for transport to the cell surface.

The protein resides in the cell membrane. V region of the variable domain of T cell receptor (TR) beta chain that participates in the antigen recognition. Alpha-beta T cell receptors are antigen specific receptors which are essential to the immune response and are present on the cell surface of T lymphocytes. Recognize peptide-major histocompatibility (MH) (pMH) complexes that are displayed by antigen presenting cells (APC), a prerequisite for efficient T cell adaptive immunity against pathogens. Binding of alpha-beta TR to pMH complex initiates TR-CD3 clustering on the cell surface and intracellular activation of LCK that phosphorylates the ITAM motifs of CD3G, CD3D, CD3E and CD247 enabling the recruitment of ZAP70. In turn ZAP70 phosphorylates LAT, which recruits numerous signaling molecules to form the LAT signalosome. The LAT signalosome propagates signal branching to three major signaling pathways, the calcium, the mitogen-activated protein kinase (MAPK) kinase and the nuclear factor NF-kappa-B (NF-kB) pathways, leading to the mobilization of transcription factors that are critical for gene expression and essential for T cell growth and differentiation. The T cell repertoire is generated in the thymus, by V-(D)-J rearrangement. This repertoire is then shaped by intrathymic selection events to generate a peripheral T cell pool of self-MH restricted, non-autoaggressive T cells. Post-thymic interaction of alpha-beta TR with the pMH complexes shapes TR structural and functional avidity. The polypeptide is T cell receptor beta variable 5-8 (Homo sapiens (Human)).